Here is a 178-residue protein sequence, read N- to C-terminus: Ribosome maturation factor RimP (178 aa).

This sequence belongs to the RimP family.

Its subcellular location is the cytoplasm. Its function is as follows. Required for maturation of 30S ribosomal subunits. The protein is Ribosome maturation factor RimP of Mycobacterium avium (strain 104).